The primary structure comprises 123 residues: Large ribosomal subunit protein eL8 (123 aa).

This sequence belongs to the eukaryotic ribosomal protein eL8 family. In terms of assembly, part of the 50S ribosomal subunit. Probably part of the RNase P complex.

Its subcellular location is the cytoplasm. In terms of biological role, multifunctional RNA-binding protein that recognizes the K-turn motif in ribosomal RNA, the RNA component of RNase P, box H/ACA, box C/D and box C'/D' sRNAs. In Methanobrevibacter smithii (strain ATCC 35061 / DSM 861 / OCM 144 / PS), this protein is Large ribosomal subunit protein eL8.